Consider the following 269-residue polypeptide: Shikimate dehydrogenase (NADP(+)) (269 aa).

Residues 14-16 (SKS) and T61 contribute to the shikimate site. The Proton acceptor role is filled by K65. Residue E77 coordinates NADP(+). 2 residues coordinate shikimate: N86 and D102. NADP(+) contacts are provided by residues 126–130 (GAGGA), 149–154 (NRTLTK), and M213. Shikimate is bound at residue Y215. NADP(+) is bound at residue G238.

The protein belongs to the shikimate dehydrogenase family. In terms of assembly, homodimer.

It carries out the reaction shikimate + NADP(+) = 3-dehydroshikimate + NADPH + H(+). It functions in the pathway metabolic intermediate biosynthesis; chorismate biosynthesis; chorismate from D-erythrose 4-phosphate and phosphoenolpyruvate: step 4/7. Involved in the biosynthesis of the chorismate, which leads to the biosynthesis of aromatic amino acids. Catalyzes the reversible NADPH linked reduction of 3-dehydroshikimate (DHSA) to yield shikimate (SA). The chain is Shikimate dehydrogenase (NADP(+)) from Actinobacillus succinogenes (strain ATCC 55618 / DSM 22257 / CCUG 43843 / 130Z).